The sequence spans 107 residues: CRISPR-associated endoribonuclease Cas2 (107 aa).

Asp6 lines the Mg(2+) pocket.

It belongs to the CRISPR-associated endoribonuclease Cas2 protein family. As to quaternary structure, homodimer, forms a heterotetramer with a Cas1 homodimer. The cofactor is Mg(2+).

Its function is as follows. CRISPR (clustered regularly interspaced short palindromic repeat), is an adaptive immune system that provides protection against mobile genetic elements (viruses, transposable elements and conjugative plasmids). CRISPR clusters contain sequences complementary to antecedent mobile elements and target invading nucleic acids. CRISPR clusters are transcribed and processed into CRISPR RNA (crRNA). Functions as a ssRNA-specific endoribonuclease. Involved in the integration of spacer DNA into the CRISPR cassette. The polypeptide is CRISPR-associated endoribonuclease Cas2 (Streptococcus mutans serotype c (strain NN2025)).